Consider the following 378-residue polypeptide: Glycerate kinase (378 aa).

Belongs to the glycerate kinase type-1 family.

It catalyses the reaction (R)-glycerate + ATP = (2R)-3-phosphoglycerate + ADP + H(+). The polypeptide is Glycerate kinase (glxK) (Haemophilus influenzae (strain ATCC 51907 / DSM 11121 / KW20 / Rd)).